An 880-amino-acid polypeptide reads, in one-letter code: Interference hedgehog (880 aa).

The first 20 residues, 1-20 (MTLLTSSLLFFSLLTSRLEA), serve as a signal peptide directing secretion. Residues 21–703 (IPVLEKSPAH…ETFNMSPMLT (683 aa)) lie on the Extracellular side of the membrane. Ig-like C2-type domains lie at 45–142 (PGVR…IARL), 132–234 (PLVV…IQLT), 252–340 (PHLL…YIKV), and 346–432 (PQIV…LQVN). 4 cysteine pairs are disulfide-bonded: cysteine 68–cysteine 126, cysteine 173–cysteine 220, cysteine 276–cysteine 324, and cysteine 367–cysteine 414. 2 N-linked (GlcNAc...) asparagine glycosylation sites follow: asparagine 102 and asparagine 209. Positions 426 to 467 (GTLLQVNPKQIQEPRESGGTHRPKPNQGSKQKQMYPPTPPNV) are disordered. Fibronectin type-III domains lie at 461–567 (PPTP…LQPG) and 575–670 (VPEL…TQRP). A glycan (N-linked (GlcNAc...) asparagine) is linked at asparagine 466. Residues arginine 497, lysine 501, lysine 503, and arginine 541 each coordinate heparin. Asparagine 557 carries N-linked (GlcNAc...) asparagine glycosylation. Residues 662–697 (LKQGRTQRPKTSTTEEPTLQMGDRDTTTPSHNETFN) form a disordered region. Composition is skewed to polar residues over residues 665-678 (GRTQ…TEEP) and 688-697 (TTPSHNETFN). The N-linked (GlcNAc...) asparagine glycan is linked to asparagine 693. Residues 704 to 724 (GTIGGGAVLILLLISTCLCVC) traverse the membrane as a helical segment. Over 725 to 880 (RRRSSRSRGN…SSGSLNSVGV (156 aa)) the chain is Cytoplasmic. 2 disordered regions span residues 728 to 762 (SSRS…QRQR) and 775 to 880 (QQQQ…SVGV). Low complexity-rich tracts occupy residues 823–837 (RAGG…NNNN) and 864–880 (SSRS…SVGV).

This sequence belongs to the immunoglobulin superfamily. IHOG family. Homodimer. Heterotetramer; 2 iHog chains bind 2 hh chains when facilitated by heparin, heparin is required to promote high-affinity interactions between hh and iHog.

It localises to the membrane. Its function is as follows. Mediates response to the active Hedgehog (Hh) protein signal in embryos, functioning upstream or at the level of patched (ptc). This Drosophila yakuba (Fruit fly) protein is Interference hedgehog.